The following is a 314-amino-acid chain: Homoserine O-succinyltransferase (314 aa).

Cys-142 (acyl-thioester intermediate) is an active-site residue. The substrate site is built by Lys-163 and Ser-192. His-235 serves as the catalytic Proton acceptor. Glu-237 is a catalytic residue. Arg-249 contacts substrate.

This sequence belongs to the MetA family.

The protein resides in the cytoplasm. It carries out the reaction L-homoserine + succinyl-CoA = O-succinyl-L-homoserine + CoA. The protein operates within amino-acid biosynthesis; L-methionine biosynthesis via de novo pathway; O-succinyl-L-homoserine from L-homoserine: step 1/1. Transfers a succinyl group from succinyl-CoA to L-homoserine, forming succinyl-L-homoserine. The chain is Homoserine O-succinyltransferase from Aeromonas salmonicida (strain A449).